Here is a 185-residue protein sequence, read N- to C-terminus: Adenine phosphoribosyltransferase (185 aa).

Belongs to the purine/pyrimidine phosphoribosyltransferase family.

The protein localises to the cytoplasm. The catalysed reaction is AMP + diphosphate = 5-phospho-alpha-D-ribose 1-diphosphate + adenine. Its pathway is purine metabolism; AMP biosynthesis via salvage pathway; AMP from adenine: step 1/1. In terms of biological role, catalyzes a salvage reaction resulting in the formation of AMP, that is energically less costly than de novo synthesis. This chain is Adenine phosphoribosyltransferase (aprt-1), found in Caenorhabditis elegans.